The following is a 209-amino-acid chain: GTP-binding protein RHB1 (209 aa).

N-acetylmethionine is present on Met1. Residues Gly28, Lys29, Thr30, Thr31, Val42, Tyr45, Thr48, Asp132, and Ala172 each contribute to the GTP site. Residue Thr30 participates in Mg(2+) binding. The Effector region motif lies at 45 to 53 (YYPTIENEF). Thr48 contacts Mg(2+). Cysteine methyl ester is present on Cys206. The S-farnesyl cysteine moiety is linked to residue Cys206. Positions 207–209 (SIM) are cleaved as a propeptide — removed in mature form.

It belongs to the small GTPase superfamily. Rheb family. As to quaternary structure, interacts with BTN2.

It localises to the cell membrane. The catalysed reaction is GTP + H2O = GDP + phosphate + H(+). Binds GTP and exhibits intrinsic GTPase activity. Involved in the regulation of arginine and lysine uptake. Acts through the CAN1 permease. This chain is GTP-binding protein RHB1 (RHB1), found in Saccharomyces cerevisiae (strain ATCC 204508 / S288c) (Baker's yeast).